Consider the following 426-residue polypeptide: Putative acid phosphatase 1 (426 aa).

The signal sequence occupies residues 1–18; it reads MRVLFYVFPFVIFALSQA. Over 19–388 the chain is Extracellular; it reads QLISVHVIFR…HNWTMTTVSW (370 aa). Histidine 29 (nucleophile) is an active-site residue. N-linked (GlcNAc...) asparagine glycosylation is found at asparagine 37 and asparagine 145. A disulfide bond links cysteine 133 and cysteine 369. The Proton donor role is filled by aspartate 276. Asparagine 380 carries an N-linked (GlcNAc...) asparagine glycan. A helical membrane pass occupies residues 389-409; sequence ILIGISAFLLIILIIMSYLAV. Residues 410–426 lie on the Cytoplasmic side of the membrane; that stretch reads RYKNRSVVTIKKVCLEN.

It belongs to the histidine acid phosphatase family.

The protein resides in the membrane. The catalysed reaction is a phosphate monoester + H2O = an alcohol + phosphate. The protein is Putative acid phosphatase 1 of Caenorhabditis briggsae.